The sequence spans 490 residues: Argininosuccinate lyase (490 aa).

2 disordered regions span residues 426–452 (DPES…LSAA) and 469–490 (ALAT…TAPE). Positions 440–452 (PAPESMAAALSAA) are enriched in low complexity. Over residues 469 to 480 (ALATAADERERV) the composition is skewed to basic and acidic residues.

It belongs to the lyase 1 family. Argininosuccinate lyase subfamily.

It is found in the cytoplasm. The catalysed reaction is 2-(N(omega)-L-arginino)succinate = fumarate + L-arginine. It participates in amino-acid biosynthesis; L-arginine biosynthesis; L-arginine from L-ornithine and carbamoyl phosphate: step 3/3. In Natronomonas pharaonis (strain ATCC 35678 / DSM 2160 / CIP 103997 / JCM 8858 / NBRC 14720 / NCIMB 2260 / Gabara) (Halobacterium pharaonis), this protein is Argininosuccinate lyase.